The chain runs to 496 residues: Glutamyl-tRNA(Gln) amidotransferase subunit A (496 aa).

Active-site charge relay system residues include Lys75 and Ser150. Catalysis depends on Ser174, which acts as the Acyl-ester intermediate.

This sequence belongs to the amidase family. GatA subfamily. Heterotrimer of A, B and C subunits.

The catalysed reaction is L-glutamyl-tRNA(Gln) + L-glutamine + ATP + H2O = L-glutaminyl-tRNA(Gln) + L-glutamate + ADP + phosphate + H(+). Allows the formation of correctly charged Gln-tRNA(Gln) through the transamidation of misacylated Glu-tRNA(Gln) in organisms which lack glutaminyl-tRNA synthetase. The reaction takes place in the presence of glutamine and ATP through an activated gamma-phospho-Glu-tRNA(Gln). The protein is Glutamyl-tRNA(Gln) amidotransferase subunit A of Burkholderia pseudomallei (strain 1106a).